Here is a 268-residue protein sequence, read N- to C-terminus: Phosphatidylglycerol--prolipoprotein diacylglyceryl transferase (268 aa).

Helical transmembrane passes span 14 to 34 (IIFSLGPISLRWYGLMYLIGF), 60 to 80 (LLFNGFAGVFLGGRIGYVLFY), 95 to 115 (VWEGGMSFHGGLIGVIVAMLV), 124 to 144 (FWVVADFVAPLIPFGLGMGRI), 176 to 196 (SQLYEFVLEGIVLFCILNWFI), 203 to 223 (GSVAGLFLLFYGLFRFIVEFF), and 238 to 258 (ISMGQILSTPMILLGALFIVL). Arg-143 is a binding site for a 1,2-diacyl-sn-glycero-3-phospho-(1'-sn-glycerol).

The protein belongs to the Lgt family.

The protein resides in the cell inner membrane. The catalysed reaction is L-cysteinyl-[prolipoprotein] + a 1,2-diacyl-sn-glycero-3-phospho-(1'-sn-glycerol) = an S-1,2-diacyl-sn-glyceryl-L-cysteinyl-[prolipoprotein] + sn-glycerol 1-phosphate + H(+). The protein operates within protein modification; lipoprotein biosynthesis (diacylglyceryl transfer). Functionally, catalyzes the transfer of the diacylglyceryl group from phosphatidylglycerol to the sulfhydryl group of the N-terminal cysteine of a prolipoprotein, the first step in the formation of mature lipoproteins. The protein is Phosphatidylglycerol--prolipoprotein diacylglyceryl transferase of Mannheimia succiniciproducens (strain KCTC 0769BP / MBEL55E).